The sequence spans 90 residues: Phosphocarrier protein NPr (90 aa).

In terms of domain architecture, HPr spans 2–90 (TQYRRVAIKN…ALFESGFDED (89 aa)). His-16 functions as the Pros-phosphohistidine intermediate in the catalytic mechanism.

The protein belongs to the HPr family.

It localises to the cytoplasm. Functionally, component of the phosphoenolpyruvate-dependent nitrogen-metabolic phosphotransferase system (nitrogen-metabolic PTS), that seems to be involved in regulating nitrogen metabolism. The phosphoryl group from phosphoenolpyruvate (PEP) is transferred to the phosphoryl carrier protein NPr by enzyme I-Ntr. Phospho-NPr then transfers it to EIIA-Ntr. Could function in the transcriptional regulation of sigma-54 dependent operons in conjunction with the NPr (PtsO) and EIIA-Ntr (PtsN) proteins. The sequence is that of Phosphocarrier protein NPr (ptsO) from Proteus mirabilis (strain HI4320).